Consider the following 298-residue polypeptide: Inosose dehydratase (298 aa).

This sequence belongs to the IolE/MocC family. The cofactor is glutathione. Co(2+) serves as cofactor. It depends on Mn(2+) as a cofactor.

It catalyses the reaction scyllo-inosose = 3D-3,5/4-trihydroxycyclohexane-1,2-dione + H2O. Its function is as follows. Catalyzes the dehydration of inosose (2-keto-myo-inositol, 2KMI or 2,4,6/3,5-pentahydroxycyclohexanone) to 3D-(3,5/4)-trihydroxycyclohexane-1,2-dione (D-2,3-diketo-4-deoxy-epi-inositol). The polypeptide is Inosose dehydratase (Erwinia tasmaniensis (strain DSM 17950 / CFBP 7177 / CIP 109463 / NCPPB 4357 / Et1/99)).